The primary structure comprises 2117 residues: Tudor domain-containing 6 (2117 aa).

Tudor domains lie at 62–118, 291–350, 527–584, 757–816, and 974–1030; these read DGNP…FFYL, AENL…FFRM, KPVV…FQQL, EPLL…FLKM, and PQTF…AGDI. The tract at residues 1125–1216 is disordered; that stretch reads ASACKKESST…SSKPEVVKPK (92 aa). Basic and acidic residues predominate over residues 1127 to 1152; sequence ACKKESSTGPKRDAIDQVPKSRESHA. 2 stretches are compositionally biased toward polar residues: residues 1153 to 1174 and 1181 to 1209; these read IQRS…STNG and DSGT…TSSK. Tudor domains lie at 1282-1340 and 1485-1543; these read DIHE…FASF and CMPV…LSDV.

Interacts (via Tudor domain) with buc (when dimethylated on arginine residues); and may be responsible for recruitment of different protein complexes to germ plasm.

It is found in the cytoplasm. In terms of biological role, tudor domain-containing protein involved in germ cell development, more specifically the formation of chromatoid body (during spermiogenesis), Balbiani body (during oogenesis), germ plasm (upon fertilization), and for proper miRNA expression and spliceosome maturation. Required for Balbiani body and germ plasm formation and mobility through interaction with dimethylated arginines in the prion-like protein Bucky ball (buc). Coordinates transcript deposition into future primordial germ cells. Interacts with known germ plasm mRNAs such as vasa, dazl, nanos3 and hook2. The chain is Tudor domain-containing 6 from Danio rerio (Zebrafish).